The chain runs to 177 residues: Large ribosomal subunit protein uL6 (177 aa).

The protein belongs to the universal ribosomal protein uL6 family. As to quaternary structure, part of the 50S ribosomal subunit.

In terms of biological role, this protein binds to the 23S rRNA, and is important in its secondary structure. It is located near the subunit interface in the base of the L7/L12 stalk, and near the tRNA binding site of the peptidyltransferase center. The protein is Large ribosomal subunit protein uL6 of Neisseria meningitidis serogroup B (strain ATCC BAA-335 / MC58).